The sequence spans 519 residues: Galactose-1-phosphate uridylyltransferase (519 aa).

Belongs to the galactose-1-phosphate uridylyltransferase type 2 family.

It is found in the cytoplasm. The catalysed reaction is alpha-D-galactose 1-phosphate + UDP-alpha-D-glucose = alpha-D-glucose 1-phosphate + UDP-alpha-D-galactose. It functions in the pathway carbohydrate metabolism; galactose metabolism. The sequence is that of Galactose-1-phosphate uridylyltransferase from Caldanaerobacter subterraneus subsp. tengcongensis (strain DSM 15242 / JCM 11007 / NBRC 100824 / MB4) (Thermoanaerobacter tengcongensis).